Reading from the N-terminus, the 145-residue chain is Transcription antitermination protein NusB (145 aa).

Belongs to the NusB family.

In terms of biological role, involved in transcription antitermination. Required for transcription of ribosomal RNA (rRNA) genes. Binds specifically to the boxA antiterminator sequence of the ribosomal RNA (rrn) operons. The chain is Transcription antitermination protein NusB from Ruminiclostridium cellulolyticum (strain ATCC 35319 / DSM 5812 / JCM 6584 / H10) (Clostridium cellulolyticum).